The sequence spans 377 residues: Chaperone protein DnaJ (377 aa).

One can recognise a J domain in the interval 5-70; it reads DFYEVLGVER…SKRAAYDQYG (66 aa). A CR-type zinc finger spans residues 136-214; sequence GTTVTIRVPT…CHGQGRVEEQ (79 aa). 8 residues coordinate Zn(2+): cysteine 149, cysteine 152, cysteine 166, cysteine 169, cysteine 188, cysteine 191, cysteine 202, and cysteine 205. 4 CXXCXGXG motif repeats span residues 149–156, 166–173, 188–195, and 202–209; these read CKTCNGSG, CTTCGGIG, CPRCHGTG, and CGSCHGQG.

Belongs to the DnaJ family. In terms of assembly, homodimer. The cofactor is Zn(2+).

The protein resides in the cytoplasm. Its function is as follows. Participates actively in the response to hyperosmotic and heat shock by preventing the aggregation of stress-denatured proteins and by disaggregating proteins, also in an autonomous, DnaK-independent fashion. Unfolded proteins bind initially to DnaJ; upon interaction with the DnaJ-bound protein, DnaK hydrolyzes its bound ATP, resulting in the formation of a stable complex. GrpE releases ADP from DnaK; ATP binding to DnaK triggers the release of the substrate protein, thus completing the reaction cycle. Several rounds of ATP-dependent interactions between DnaJ, DnaK and GrpE are required for fully efficient folding. Also involved, together with DnaK and GrpE, in the DNA replication of plasmids through activation of initiation proteins. In Pseudomonas paraeruginosa (strain DSM 24068 / PA7) (Pseudomonas aeruginosa (strain PA7)), this protein is Chaperone protein DnaJ.